Here is a 392-residue protein sequence, read N- to C-terminus: L-rhamnonate dehydratase (392 aa).

Positions 22 and 48 each coordinate substrate. Mg(2+) is bound by residues Asp214, Glu240, and Glu268. His318 (proton acceptor) is an active-site residue. Residue Glu338 coordinates substrate.

The protein belongs to the mandelate racemase/muconate lactonizing enzyme family. RhamD subfamily. In terms of assembly, homooctamer; tetramer of dimers. Requires Mg(2+) as cofactor.

It carries out the reaction L-rhamnonate = 2-dehydro-3-deoxy-L-rhamnonate + H2O. Functionally, catalyzes the dehydration of L-rhamnonate to 2-keto-3-deoxy-L-rhamnonate (KDR). The polypeptide is L-rhamnonate dehydratase (Paraburkholderia phymatum (strain DSM 17167 / CIP 108236 / LMG 21445 / STM815) (Burkholderia phymatum)).